We begin with the raw amino-acid sequence, 475 residues long: Ribulose bisphosphate carboxylase large chain (475 aa).

The propeptide occupies Met1–Ser2. At Pro3 the chain carries N-acetylproline. An N6,N6,N6-trimethyllysine modification is found at Lys14. Asn123 and Thr173 together coordinate substrate. The Proton acceptor role is filled by Lys175. Lys177 lines the substrate pocket. The Mg(2+) site is built by Lys201, Asp203, and Glu204. Lys201 bears the N6-carboxylysine mark. His294 serves as the catalytic Proton acceptor. Arg295, His327, and Ser379 together coordinate substrate.

The protein belongs to the RuBisCO large chain family. Type I subfamily. Heterohexadecamer of 8 large chains and 8 small chains; disulfide-linked. The disulfide link is formed within the large subunit homodimers. Requires Mg(2+) as cofactor. In terms of processing, the disulfide bond which can form in the large chain dimeric partners within the hexadecamer appears to be associated with oxidative stress and protein turnover.

Its subcellular location is the plastid. The protein localises to the chloroplast. The catalysed reaction is 2 (2R)-3-phosphoglycerate + 2 H(+) = D-ribulose 1,5-bisphosphate + CO2 + H2O. It carries out the reaction D-ribulose 1,5-bisphosphate + O2 = 2-phosphoglycolate + (2R)-3-phosphoglycerate + 2 H(+). Functionally, ruBisCO catalyzes two reactions: the carboxylation of D-ribulose 1,5-bisphosphate, the primary event in carbon dioxide fixation, as well as the oxidative fragmentation of the pentose substrate in the photorespiration process. Both reactions occur simultaneously and in competition at the same active site. This Pinus krempfii (Krempf's pine) protein is Ribulose bisphosphate carboxylase large chain.